The sequence spans 165 residues: Ribosome maturation factor RimM (165 aa).

One can recognise a PRC barrel domain in the interval 94–165 (EDEFYIADLT…YVILNYQREA (72 aa)).

The protein belongs to the RimM family. As to quaternary structure, binds ribosomal protein uS19.

The protein resides in the cytoplasm. In terms of biological role, an accessory protein needed during the final step in the assembly of 30S ribosomal subunit, possibly for assembly of the head region. Essential for efficient processing of 16S rRNA. May be needed both before and after RbfA during the maturation of 16S rRNA. It has affinity for free ribosomal 30S subunits but not for 70S ribosomes. This Rickettsia rickettsii (strain Sheila Smith) protein is Ribosome maturation factor RimM.